We begin with the raw amino-acid sequence, 83 residues long: uncharacterized protein (83 aa).

Transmembrane regions (helical) follow at residues 5–22 (VLLS…VYSI), 32–49 (IIKI…FSPA), and 56–78 (IGTI…IFIA).

The protein localises to the cell membrane. This is an uncharacterized protein from Rickettsia prowazekii (strain Madrid E).